A 640-amino-acid chain; its full sequence is uncharacterized protein (640 aa).

The disordered stretch occupies residues Q594–E614.

This is an uncharacterized protein from Rattus norvegicus (Rat).